We begin with the raw amino-acid sequence, 160 residues long: Cytochrome b6-f complex subunit 4 (160 aa).

The next 3 membrane-spanning stretches (helical) occupy residues 36–56 (LLYVFPVVILGTIACSIGLAI), 95–115 (LLGVLSMAAVPAGLLTVPFIE), and 131–151 (TIFLISTVITIWLGIGATMPI).

Belongs to the cytochrome b family. PetD subfamily. In terms of assembly, the 4 large subunits of the cytochrome b6-f complex are cytochrome b6, subunit IV (17 kDa polypeptide, petD), cytochrome f and the Rieske protein, while the 4 small subunits are petG, petL, petM and petN. The complex functions as a dimer.

The protein localises to the plastid. Its subcellular location is the chloroplast thylakoid membrane. Its function is as follows. Component of the cytochrome b6-f complex, which mediates electron transfer between photosystem II (PSII) and photosystem I (PSI), cyclic electron flow around PSI, and state transitions. In Porphyra purpurea (Red seaweed), this protein is Cytochrome b6-f complex subunit 4.